Here is a 165-residue protein sequence, read N- to C-terminus: ATP synthase subunit b (165 aa).

A helical transmembrane segment spans residues 7–27 (GTSLGNLLIVTGSFILLLLLV).

This sequence belongs to the ATPase B chain family. As to quaternary structure, F-type ATPases have 2 components, F(1) - the catalytic core - and F(0) - the membrane proton channel. F(1) has five subunits: alpha(3), beta(3), gamma(1), delta(1), epsilon(1). F(0) has three main subunits: a(1), b(2) and c(10-14). The alpha and beta chains form an alternating ring which encloses part of the gamma chain. F(1) is attached to F(0) by a central stalk formed by the gamma and epsilon chains, while a peripheral stalk is formed by the delta and b chains.

It is found in the cell membrane. Functionally, f(1)F(0) ATP synthase produces ATP from ADP in the presence of a proton or sodium gradient. F-type ATPases consist of two structural domains, F(1) containing the extramembraneous catalytic core and F(0) containing the membrane proton channel, linked together by a central stalk and a peripheral stalk. During catalysis, ATP synthesis in the catalytic domain of F(1) is coupled via a rotary mechanism of the central stalk subunits to proton translocation. In terms of biological role, component of the F(0) channel, it forms part of the peripheral stalk, linking F(1) to F(0). The polypeptide is ATP synthase subunit b (Streptococcus mutans serotype c (strain ATCC 700610 / UA159)).